We begin with the raw amino-acid sequence, 1416 residues long: Phospholipid-transporting ATPase VD (1416 aa).

Over 1-97 the chain is Cytoplasmic; the sequence is MTELLQWARH…PRNLFEQFHR (97 aa). The helical transmembrane segment at 98–118 threads the bilayer; that stretch reads AANLYFLFLVVLNWVPLVEAF. The Exoplasmic loop portion of the chain corresponds to 119–120; that stretch reads QK. The helical transmembrane segment at 121–141 threads the bilayer; sequence EITMLPLVVVLTIIAIKDGLE. Topologically, residues 142–321 are cytoplasmic; that stretch reads DYRKYKIDKQ…SKLERRANTD (180 aa). A helical membrane pass occupies residues 322–342; sequence VLWCVLLLIVMCLTGALGHGI. At 343-365 the chain is on the exoplasmic loop side; the sequence is WLSRYENMLFFNIPEPDGRVISP. A helical membrane pass occupies residues 366-386; that stretch reads VLTGFYVFWTMIILLQVLIPI. At 387–1110 the chain is on the cytoplasmic side; the sequence is SLYVSIEIVK…HWCYTRLSNM (724 aa). Asp438 serves as the catalytic 4-aspartylphosphate intermediate. Positions 438, 439, and 440 each coordinate ATP. A Mg(2+)-binding site is contributed by Asp438. Thr440 serves as a coordination point for Mg(2+). The disordered stretch occupies residues 498–544; it reads AQGCRTVPSGPLGKPSAQLSGSTSAVGNGEGSGEVPHSRQAAFSSPM. The segment covering 514 to 523 has biased composition (polar residues); it reads AQLSGSTSAV. ATP is bound by residues Glu729, Phe771, Lys795, Arg838, Thr918, Gly919, and Asp920. Positions 971–990 are disordered; sequence PELASSRKNFPQPSDAQGQG. Residues 976–987 show a composition bias toward polar residues; it reads SRKNFPQPSDAQ. ATP is bound by residues 993 to 1000, Arg1027, and Lys1033; that span reads GLVITGKT. Asp1053 is a binding site for Mg(2+). ATP-binding residues include Asn1056 and Asp1057. Position 1057 (Asp1057) interacts with Mg(2+). A helical transmembrane segment spans residues 1111-1131; that stretch reads ILYFFYKNVAYVNLLFWYQFF. The Exoplasmic loop segment spans residues 1132–1142; it reads CGFSGTSMTDY. The helical transmembrane segment at 1143–1163 threads the bilayer; the sequence is WVLIFFNLLFTSVPPIIYGVL. At 1164–1192 the chain is on the cytoplasmic side; that stretch reads EKDVSAETLLQLPELYRSGQRSEEYLPLT. Residues 1193–1213 traverse the membrane as a helical segment; it reads FWITLLDAFYQSLVCFFVPYF. Residues 1214–1221 are Exoplasmic loop-facing; sequence TYQGSDID. A helical transmembrane segment spans residues 1222 to 1242; sequence IFTFGNPLNTAALFIILLHLV. Topologically, residues 1243–1252 are cytoplasmic; it reads IESKSLTWIH. The chain crosses the membrane as a helical span at residues 1253–1273; sequence MLVTVGSILSYFFFALAFGAL. Topologically, residues 1274-1289 are exoplasmic loop; sequence CVTCNPPSNPYGIMRK. The chain crosses the membrane as a helical span at residues 1290-1310; that stretch reads HMLDPVFYLVCVLTTFVALLP. Topologically, residues 1311 to 1416 are cytoplasmic; the sequence is RFLYRVLQGS…ASKMTGSSAS (106 aa). The tract at residues 1358-1416 is disordered; that stretch reads SKHASQSAAMSGRPTPGSSAVLAMKSATVSTVEQSTRETALDRGCSEPGASKMTGSSAS. 1361 to 1368 contacts ATP; that stretch reads ASQSAAMS. The segment covering 1392–1402 has biased composition (basic and acidic residues); sequence STRETALDRGC.

The protein belongs to the cation transport ATPase (P-type) (TC 3.A.3) family. Type IV subfamily. In terms of assembly, component of a P4-ATPase flippase complex which consists of a catalytic alpha subunit ATP10A and an accessory beta subunit TMEM30A. Mg(2+) is required as a cofactor. Autophosphorylated at the conserved aspartate of the P-type ATPase signature sequence. As to expression, expressed at low amounts in liver, brain, testes, and kidney (at protein level). Expressed in placenta.

It localises to the cell membrane. Its subcellular location is the endoplasmic reticulum membrane. The catalysed reaction is ATP + H2O + phospholipidSide 1 = ADP + phosphate + phospholipidSide 2.. It catalyses the reaction a beta-D-glucosyl-(1&lt;-&gt;1')-N-acylsphing-4-enine(out) + ATP + H2O = a beta-D-glucosyl-(1&lt;-&gt;1')-N-acylsphing-4-enine(in) + ADP + phosphate + H(+). Functionally, catalytic component of a P4-ATPase flippase complex, which catalyzes the hydrolysis of ATP coupled to the transport of glucosylceramide (GlcCer) from the outer to the inner leaflet of the plasma membrane. This Mus musculus (Mouse) protein is Phospholipid-transporting ATPase VD (Atp10d).